We begin with the raw amino-acid sequence, 258 residues long: Acyl-[acyl-carrier-protein]--UDP-N-acetylglucosamine O-acyltransferase (258 aa).

The protein belongs to the transferase hexapeptide repeat family. LpxA subfamily. Homotrimer.

The protein resides in the cytoplasm. The catalysed reaction is a (3R)-hydroxyacyl-[ACP] + UDP-N-acetyl-alpha-D-glucosamine = a UDP-3-O-[(3R)-3-hydroxyacyl]-N-acetyl-alpha-D-glucosamine + holo-[ACP]. The protein operates within glycolipid biosynthesis; lipid IV(A) biosynthesis; lipid IV(A) from (3R)-3-hydroxytetradecanoyl-[acyl-carrier-protein] and UDP-N-acetyl-alpha-D-glucosamine: step 1/6. Functionally, involved in the biosynthesis of lipid A, a phosphorylated glycolipid that anchors the lipopolysaccharide to the outer membrane of the cell. The sequence is that of Acyl-[acyl-carrier-protein]--UDP-N-acetylglucosamine O-acyltransferase from Pseudomonas putida (strain GB-1).